Consider the following 709-residue polypeptide: MSLAQKINRVVAPFEVISPYQPSGDQPKAIAELAERVEAGEKDVVLMGATGTGKSATTAWLVERLQRPTLVMVQNKTLAAQLANEFRELLPNNAVEYFVSYYDYYQPEAYVPQTDTFIEKDSSINEEVERLRHSATNALLTRRDVIVVATVSCIYGLGTPEEYIEQMVTLRRGAEMDRDVLLRRFVQMQYVRNDVDFHRGTFRVRGDTVEIIPMYEELAVRIEFFGDEIESIQTLHPLTGQVVREEEEMYIFPASHYVAGDERMGRAITTIEDELRERLQELESQDKLLEAQRLRMRTTYDLEMMQQMGYCNGIENYSRHIDGRPAGSAPHCLLDYFPDDFLLVVDESHVTIPQIGAMYEGDMSRKRTLVEHGFRLPSAMDNRPLKWDEFLERIGQTVYLSATPGAYELGQADGYVEQIIRPTGLVDPQVVVKPTEGQIDDLLEQIRVRTAKDERVLVTTLTKRMAEDLTDYLLEAGVKVEYLHSDVDTLRRVELLRELRKGTFDVLVGINLLREGLDLPEVSLVAILDADKEGFLRSTTSLIQTIGRAARNVSGEVHMYAGNVTDSMRRAIEETERRRAVQIAYNEEHGIDPQPLRKRIADITDQLAREDADTADFLKGMGGVKSGFDFGMGHRGLSSLDRAPATGEGAAAPAVDPASLPAKDLADLIEQMSQQMHQAAADLQFELAARLRDEVGELKKELRQMKREQ.

The Helicase ATP-binding domain maps to 35-416; the sequence is ERVEAGEKDV…YELGQADGYV (382 aa). Residue 48–55 coordinates ATP; it reads GATGTGKS. The short motif at 101–124 is the Beta-hairpin element; it reads YYDYYQPEAYVPQTDTFIEKDSSI. The 167-residue stretch at 438–604 folds into the Helicase C-terminal domain; the sequence is QIDDLLEQIR…PLRKRIADIT (167 aa). Positions 666–701 constitute a UVR domain; that stretch reads ADLIEQMSQQMHQAAADLQFELAARLRDEVGELKKE.

The protein belongs to the UvrB family. As to quaternary structure, forms a heterotetramer with UvrA during the search for lesions. Interacts with UvrC in an incision complex.

The protein localises to the cytoplasm. Its function is as follows. The UvrABC repair system catalyzes the recognition and processing of DNA lesions. A damage recognition complex composed of 2 UvrA and 2 UvrB subunits scans DNA for abnormalities. Upon binding of the UvrA(2)B(2) complex to a putative damaged site, the DNA wraps around one UvrB monomer. DNA wrap is dependent on ATP binding by UvrB and probably causes local melting of the DNA helix, facilitating insertion of UvrB beta-hairpin between the DNA strands. Then UvrB probes one DNA strand for the presence of a lesion. If a lesion is found the UvrA subunits dissociate and the UvrB-DNA preincision complex is formed. This complex is subsequently bound by UvrC and the second UvrB is released. If no lesion is found, the DNA wraps around the other UvrB subunit that will check the other stand for damage. The chain is UvrABC system protein B from Micrococcus luteus (strain ATCC 4698 / DSM 20030 / JCM 1464 / CCM 169 / CCUG 5858 / IAM 1056 / NBRC 3333 / NCIMB 9278 / NCTC 2665 / VKM Ac-2230) (Micrococcus lysodeikticus).